The primary structure comprises 172 residues: MESRFKLKEEYHQSCCAIQVRVPVIKTSSTKRKNQLYTTGPFIMRSSSPSQPPSIKAQHRIAKHKAIRRRRIDLNCGCSIFYHIKCADHGFTHRGEHHCASGREFRFYLGGTKSPLFQDHAGGRSSIHTDKDIPHPNQVQSQPQESTGSPQSIPELPSLDDIDSSFWDDIFK.

The Nuclear localization signal signature appears at 56–71 (KAQHRIAKHKAIRRRR). Residues 76 to 93 (CGCSIFYHIKCADHGFTH) fold into a zinc finger. Residues 119 to 172 (DHAGGRSSIHTDKDIPHPNQVQSQPQESTGSPQSIPELPSLDDIDSSFWDDIFK) are disordered. Residues 137–152 (NQVQSQPQESTGSPQS) are compositionally biased toward polar residues. The transactivation stretch occupies residues 158–172 (SLDDIDSSFWDDIFK).

It belongs to the geminiviridae transcriptional activator protein family. As to quaternary structure, monomer. Homodimer. Homooligomer. Self-interaction correlates with nuclear localization and efficient activation of transcription. Monomers suppress local silencing by interacting with and inactivating host adenosine kinase 2 (ADK2) in the cytoplasm. Interacts with and inhibits host SNF1 kinase. Binds to ssDNA. Phosphorylated.

The protein localises to the host nucleus. It is found in the host cytoplasm. Functionally, strong activator of the late viral genes promoters. Enhances the expression of the capsid protein and nuclear shuttle protein. Acts as a suppressor of RNA-mediated gene silencing, also known as post-transcriptional gene silencing (PTGS), a mechanism of plant viral defense that limits the accumulation of viral RNAs. Suppresses the host RNA silencing by inhibiting adenosine kinase 2 (ADK2), a kinase involved in a general methylation pathway. Also suppresses the host basal defense by interacting with and inhibiting SNF1 kinase, a key regulator of cell metabolism implicated in innate antiviral defense. Determines pathogenicity. This is Transcriptional activator protein from Bean golden yellow mosaic virus (isolate Puerto Rico) (BGYMV).